The following is a 348-amino-acid chain: 4-hydroxyphenylpyruvate dioxygenase (348 aa).

2 VOC domains span residues 11-141 (GFAF…ITSS) and 151-303 (AIDH…IFTE). The Fe cation site is built by His154, His232, and Glu312.

The protein belongs to the 4HPPD family. Fe cation is required as a cofactor.

The enzyme catalyses 3-(4-hydroxyphenyl)pyruvate + O2 = homogentisate + CO2. Its function is as follows. Catalyzes the transformation of p-hydroxyphenylpyruvate into HGA. Has hemolytic and brown pigment production activity. The chain is 4-hydroxyphenylpyruvate dioxygenase (lly) from Legionella pneumophila (strain Corby).